The following is a 397-amino-acid chain: Tubby-like protein 8 (397 aa).

Residues 1–16 (MAGSRKVNDLLEENKG) are compositionally biased toward basic and acidic residues. Residues 1 to 46 (MAGSRKVNDLLEENKGNVDTITGSLSTQKGEDKENVSPEKVSTSVE) form a disordered region. Residues 17 to 28 (NVDTITGSLSTQ) show a composition bias toward polar residues.

This sequence belongs to the TUB family. Mostly expressed in roots, flowers and siliques.

The protein is Tubby-like protein 8 of Arabidopsis thaliana (Mouse-ear cress).